The following is a 362-amino-acid chain: Nuclear hormone receptor family member nhr-77 (362 aa).

Positions 8-82 (DPICPVCEFP…AGMKRNLVKQ (75 aa)) form a DNA-binding region, nuclear receptor. NR C4-type zinc fingers lie at residues 11–32 (CPVC…CGAC) and 48–69 (CEKN…FDYC). The region spanning 145 to 362 (EAEKDVSKIL…KLYIQLGLPF (218 aa)) is the NR LBD domain.

It belongs to the nuclear hormone receptor family.

Its subcellular location is the nucleus. Functionally, orphan nuclear receptor. In Caenorhabditis elegans, this protein is Nuclear hormone receptor family member nhr-77 (nhr-77).